Consider the following 92-residue polypeptide: Ictacalcin (92 aa).

EF-hand domains lie at Ile-12 to Asn-47 and Ser-49 to Leu-84. Ca(2+) is bound by residues Thr-27, Glu-32, Asp-62, Asn-64, Asp-66, and Glu-73.

The protein belongs to the S-100 family. Abundant in epithelial cells of olfactory rosette, barbel, skin and gill but not brain or muscle.

In terms of biological role, plays an important role in catfish calcium homeostasis. This chain is Ictacalcin, found in Ictalurus punctatus (Channel catfish).